The following is a 259-amino-acid chain: Thiazole synthase (259 aa).

Catalysis depends on Lys95, which acts as the Schiff-base intermediate with DXP. 1-deoxy-D-xylulose 5-phosphate contacts are provided by residues Gly156, Ala182–Gly183, and Ala204–Ser205.

It belongs to the ThiG family. As to quaternary structure, homotetramer. Forms heterodimers with either ThiH or ThiS.

It is found in the cytoplasm. The catalysed reaction is [ThiS sulfur-carrier protein]-C-terminal-Gly-aminoethanethioate + 2-iminoacetate + 1-deoxy-D-xylulose 5-phosphate = [ThiS sulfur-carrier protein]-C-terminal Gly-Gly + 2-[(2R,5Z)-2-carboxy-4-methylthiazol-5(2H)-ylidene]ethyl phosphate + 2 H2O + H(+). The protein operates within cofactor biosynthesis; thiamine diphosphate biosynthesis. Catalyzes the rearrangement of 1-deoxy-D-xylulose 5-phosphate (DXP) to produce the thiazole phosphate moiety of thiamine. Sulfur is provided by the thiocarboxylate moiety of the carrier protein ThiS. In vitro, sulfur can be provided by H(2)S. In Corynebacterium aurimucosum (strain ATCC 700975 / DSM 44827 / CIP 107346 / CN-1) (Corynebacterium nigricans), this protein is Thiazole synthase.